We begin with the raw amino-acid sequence, 693 residues long: Tegument protein UL47 (693 aa).

Disordered regions lie at residues 1–32 and 48–126; these read MSAR…DGVG and ELEA…GYLG. Residues 48-57 are compositionally biased toward acidic residues; sequence ELEALEEMAG. The segment at 50-75 is RNA-binding; the sequence is EALEEMAGDEPPVRRRREGPRARRRR. The Nuclear localization signal signature appears at 63–75; that stretch reads RRRREGPRARRRR. The span at 63–75 shows a compositional bias: basic residues; it reads RRRREGPRARRRR. Positions 647–670 match the Nuclear export signal motif; that stretch reads SVLGPGVRVVDIMSQFRKLLMGDE.

Belongs to the alphaherpesvirinae HHV-1 UL47 family. As to quaternary structure, interacts with US3 kinase. Interacts with UL31 and UL34; these interactions seem important for efficient virion nuclear egress. Interacts with UL41/VHS. Phosphorylated by US3. This phosphorylation is required for proper nuclear localization.

The protein resides in the virion tegument. The protein localises to the host nucleus. Its subcellular location is the host cytoplasm. Tegument protein that can bind to various RNA transcripts. Plays a role in the attenuation of selective viral and cellular mRNA degradation by modulating the activity of host shutoff RNase UL41/VHS. Also plays a role in the primary envelopment of virions in the perinuclear space, probably by interacting with two nuclear egress proteins UL31 and UL34. This chain is Tegument protein UL47, found in Human herpesvirus 1 (strain F) (HHV-1).